The primary structure comprises 353 residues: UPF0283 membrane protein KPK_3110 (353 aa).

3 consecutive transmembrane segments (helical) span residues methionine 70–threonine 90, tryptophan 99–valine 119, and glutamate 213–tryptophan 233.

It belongs to the UPF0283 family.

The protein localises to the cell inner membrane. The sequence is that of UPF0283 membrane protein KPK_3110 from Klebsiella pneumoniae (strain 342).